A 330-amino-acid chain; its full sequence is DNA-directed RNA polymerase subunit alpha (330 aa).

Residues 1-232 form an alpha N-terminal domain (alpha-NTD) region; sequence MAILAFQKPD…YHFMLFSDEK (232 aa). Residues 248–330 are alpha C-terminal domain (alpha-CTD); that stretch reads EEVLHMRQLL…DISKYKLDKE (83 aa).

This sequence belongs to the RNA polymerase alpha chain family. In terms of assembly, homodimer. The RNAP catalytic core consists of 2 alpha, 1 beta, 1 beta' and 1 omega subunit. When a sigma factor is associated with the core the holoenzyme is formed, which can initiate transcription.

It catalyses the reaction RNA(n) + a ribonucleoside 5'-triphosphate = RNA(n+1) + diphosphate. Functionally, DNA-dependent RNA polymerase catalyzes the transcription of DNA into RNA using the four ribonucleoside triphosphates as substrates. The protein is DNA-directed RNA polymerase subunit alpha of Bacteroides thetaiotaomicron (strain ATCC 29148 / DSM 2079 / JCM 5827 / CCUG 10774 / NCTC 10582 / VPI-5482 / E50).